We begin with the raw amino-acid sequence, 887 residues long: Semaphorin-6B (887 aa).

An N-terminal signal peptide occupies residues 1 to 26 (MWTPRAPPPRPALLFLLLLLLRVTHG). Over 27–605 (LFPDEPPPLS…VSVNLLVTSS (579 aa)) the chain is Extracellular. A Sema domain is found at 32 to 525 (PPPLSVAPRD…FPRCVVRVPV (494 aa)). N-linked (GlcNAc...) asparagine glycosylation is present at N75. 2 disulfide bridges follow: C117-C127 and C145-C154. 3 N-linked (GlcNAc...) asparagine glycosylation sites follow: N156, N168, and N292. 2 disulfide bridges follow: C268–C379 and C293–C338. N-linked (GlcNAc...) asparagine glycosylation is found at N387, N442, and N463. 4 disulfides stabilise this stretch: C487-C519, C528-C546, C534-C580, and C538-C554. The helical transmembrane segment at 606 to 626 (VAAFVVGAVVSGFSVGWFVGL) threads the bilayer. Residues 627–887 (RERRELARRK…TGERTAPPVP (261 aa)) lie on the Cytoplasmic side of the membrane. 3 disordered regions span residues 656–675 (LGER…GGPG), 697–717 (HGGP…TPLP), and 759–887 (APEQ…PPVP). The span at 662–674 (TGTGGRGGAGGGP) shows a compositional bias: gly residues. R667 carries the post-translational modification Omega-N-methylarginine. The span at 707–717 (LLPTPEQTPLP) shows a compositional bias: low complexity.

Belongs to the semaphorin family.

It is found in the cell membrane. Functions as a cell surface repellent for mossy fibers of developing neurons in the hippocampus where it plays a role in axon guidance. May function through the PLXNA4 receptor expressed by mossy cell axons. This chain is Semaphorin-6B (Sema6b), found in Rattus norvegicus (Rat).